A 308-amino-acid polypeptide reads, in one-letter code: Probable GTP 3',8-cyclase (308 aa).

The Radical SAM core domain maps to 4-222 (RFGRPLEDLR…KKLIRKKHFR (219 aa)). Residue Arg13 coordinates GTP. [4Fe-4S] cluster contacts are provided by Cys20, Cys24, and Cys27. Lys60 is a GTP binding site. Gly64 provides a ligand contact to S-adenosyl-L-methionine. Thr90 is a GTP binding site. Ser114 provides a ligand contact to S-adenosyl-L-methionine. Lys151 provides a ligand contact to GTP. Residues Cys245 and Cys248 each coordinate [4Fe-4S] cluster. 250–252 (RIR) contacts GTP. Residue Cys262 coordinates [4Fe-4S] cluster.

Belongs to the radical SAM superfamily. MoaA family. [4Fe-4S] cluster is required as a cofactor.

It catalyses the reaction GTP + AH2 + S-adenosyl-L-methionine = (8S)-3',8-cyclo-7,8-dihydroguanosine 5'-triphosphate + 5'-deoxyadenosine + L-methionine + A + H(+). It participates in cofactor biosynthesis; molybdopterin biosynthesis. Its function is as follows. Catalyzes the cyclization of GTP to (8S)-3',8-cyclo-7,8-dihydroguanosine 5'-triphosphate. The polypeptide is Probable GTP 3',8-cyclase (Saccharolobus solfataricus (strain ATCC 35092 / DSM 1617 / JCM 11322 / P2) (Sulfolobus solfataricus)).